The chain runs to 43 residues: Protein PsbN (43 aa).

The helical transmembrane segment at 5–27 threads the bilayer; the sequence is TLVTISISCLLVSFTGYAIYTSF.

The protein belongs to the PsbN family.

It localises to the plastid. The protein localises to the chloroplast thylakoid membrane. In terms of biological role, may play a role in photosystem I and II biogenesis. The polypeptide is Protein PsbN (Welwitschia mirabilis (Tree tumbo)).